We begin with the raw amino-acid sequence, 175 residues long: uncharacterized protein (175 aa).

This sequence belongs to the asfivirus B175L family.

This is an uncharacterized protein from Ornithodoros (relapsing fever ticks).